We begin with the raw amino-acid sequence, 376 residues long: Queuine tRNA-ribosyltransferase (376 aa).

Catalysis depends on Asp90, which acts as the Proton acceptor. Residues 90 to 94, Asp144, Gln193, and Gly220 contribute to the substrate site; that span reads DSGGF. Residues 251-257 are RNA binding; sequence GVGTPED. Asp270 serves as the catalytic Nucleophile. The segment at 275–279 is RNA binding; important for wobble base 34 recognition; the sequence is TRNAR. Positions 308, 310, 313, and 339 each coordinate Zn(2+).

It belongs to the queuine tRNA-ribosyltransferase family. As to quaternary structure, homodimer. Within each dimer, one monomer is responsible for RNA recognition and catalysis, while the other monomer binds to the replacement base PreQ1. It depends on Zn(2+) as a cofactor.

It catalyses the reaction 7-aminomethyl-7-carbaguanine + guanosine(34) in tRNA = 7-aminomethyl-7-carbaguanosine(34) in tRNA + guanine. It participates in tRNA modification; tRNA-queuosine biosynthesis. Functionally, catalyzes the base-exchange of a guanine (G) residue with the queuine precursor 7-aminomethyl-7-deazaguanine (PreQ1) at position 34 (anticodon wobble position) in tRNAs with GU(N) anticodons (tRNA-Asp, -Asn, -His and -Tyr). Catalysis occurs through a double-displacement mechanism. The nucleophile active site attacks the C1' of nucleotide 34 to detach the guanine base from the RNA, forming a covalent enzyme-RNA intermediate. The proton acceptor active site deprotonates the incoming PreQ1, allowing a nucleophilic attack on the C1' of the ribose to form the product. After dissociation, two additional enzymatic reactions on the tRNA convert PreQ1 to queuine (Q), resulting in the hypermodified nucleoside queuosine (7-(((4,5-cis-dihydroxy-2-cyclopenten-1-yl)amino)methyl)-7-deazaguanosine). This chain is Queuine tRNA-ribosyltransferase, found in Campylobacter concisus (strain 13826).